Consider the following 347-residue polypeptide: Phenylalanine--tRNA ligase alpha subunit (347 aa).

Position 261 (Glu-261) interacts with Mg(2+).

The protein belongs to the class-II aminoacyl-tRNA synthetase family. Phe-tRNA synthetase alpha subunit type 1 subfamily. In terms of assembly, tetramer of two alpha and two beta subunits. Mg(2+) serves as cofactor.

Its subcellular location is the cytoplasm. The catalysed reaction is tRNA(Phe) + L-phenylalanine + ATP = L-phenylalanyl-tRNA(Phe) + AMP + diphosphate + H(+). This chain is Phenylalanine--tRNA ligase alpha subunit, found in Streptococcus thermophilus (strain ATCC BAA-491 / LMD-9).